Here is a 129-residue protein sequence, read N- to C-terminus: Glycine cleavage system H protein (129 aa).

The 83-residue stretch at 24–106 folds into the Lipoyl-binding domain; it reads TYTVGITEHA…YAGGWIFKIK (83 aa). K65 is subject to N6-lipoyllysine.

The protein belongs to the GcvH family. The glycine cleavage system is composed of four proteins: P, T, L and H. It depends on (R)-lipoate as a cofactor.

In terms of biological role, the glycine cleavage system catalyzes the degradation of glycine. The H protein shuttles the methylamine group of glycine from the P protein to the T protein. The sequence is that of Glycine cleavage system H protein from Escherichia coli O7:K1 (strain IAI39 / ExPEC).